A 267-amino-acid polypeptide reads, in one-letter code: Large ribosomal subunit protein uL2c (267 aa).

This sequence belongs to the universal ribosomal protein uL2 family. Part of the 50S ribosomal subunit.

Its subcellular location is the plastid. The protein localises to the apicoplast. In Toxoplasma gondii, this protein is Large ribosomal subunit protein uL2c (rpl2).